Here is a 136-residue protein sequence, read N- to C-terminus: Class I hydrophobin 16 (136 aa).

The signal sequence occupies residues 1 to 19 (MKFTSVIALVATAATLVGA). 4 disulfide bridges follow: Cys-58–Cys-115, Cys-65–Cys-109, Cys-66–Cys-99, and Cys-116–Cys-129. Residue Asn-74 is glycosylated (N-linked (GlcNAc...) asparagine).

This sequence belongs to the fungal hydrophobin family. As to quaternary structure, self-assembles to form functional amyloid fibrils called rodlets. Self-assembly into fibrillar rodlets occurs spontaneously at hydrophobic:hydrophilic interfaces and the rodlets further associate laterally to form amphipathic monolayers.

Its subcellular location is the secreted. The protein localises to the cell wall. Aerial growth, conidiation, and dispersal of filamentous fungi in the environment rely upon a capability of their secreting small amphipathic proteins called hydrophobins (HPBs) with low sequence identity. Class I can self-assemble into an outermost layer of rodlet bundles on aerial cell surfaces, conferring cellular hydrophobicity that supports fungal growth, development and dispersal; whereas Class II form highly ordered films at water-air interfaces through intermolecular interactions but contribute nothing to the rodlet structure. Hydph16 is a class I hydrophobin that has specific functions in aerial mycelium formation, cell wall stress protection, and cell wall structure formation, but does not seem to be involved in mycelial hydrophobicity. Specifically functions in resisting cell wall synthesis inhibitors. The polypeptide is Class I hydrophobin 16 (Pleurotus ostreatus (strain PC15) (Oyster mushroom)).